The sequence spans 102 residues: ATP-dependent Clp protease adapter protein ClpS (102 aa).

It belongs to the ClpS family. In terms of assembly, binds to the N-terminal domain of the chaperone ClpA.

Functionally, involved in the modulation of the specificity of the ClpAP-mediated ATP-dependent protein degradation. This is ATP-dependent Clp protease adapter protein ClpS from Herminiimonas arsenicoxydans.